We begin with the raw amino-acid sequence, 247 residues long: Cytochrome c oxidase subunit 2 (247 aa).

Residues 1-11 form the signal peptide; that stretch reads MFYLLNSIIMN. Residues 12 to 38 lie on the Mitochondrial intermembrane side of the membrane; it reads DVPTPYGMYFQDSATPNQEGILELHDN. Residues 39 to 59 form a helical membrane-spanning segment; sequence IMFYLFIILGLVSWLLFTIVR. Over 60–78 the chain is Mitochondrial matrix; sequence TYSKNPIAYKYIKHGQTIE. Residues 79-101 traverse the membrane as a helical segment; the sequence is IIWTIFPAVILLIIAFPSFILLY. Residues 102-247 lie on the Mitochondrial intermembrane side of the membrane; sequence LCDEVISPAM…PAFLEWLNEQ (146 aa). Cu cation-binding residues include H182, C217, E219, C221, H225, and M228. E219 contributes to the Mg(2+) binding site.

This sequence belongs to the cytochrome c oxidase subunit 2 family. In terms of assembly, component of the cytochrome c oxidase (complex IV, CIV), a multisubunit enzyme composed of a catalytic core of 3 subunits and several supernumerary subunits. The complex exists as a monomer or a dimer and forms supercomplexes (SCs) in the inner mitochondrial membrane with ubiquinol-cytochrome c oxidoreductase (cytochrome b-c1 complex, complex III, CIII). Cu cation serves as cofactor. The signal sequence of COX2 is processed by IMP1.

It localises to the mitochondrion inner membrane. It catalyses the reaction 4 Fe(II)-[cytochrome c] + O2 + 8 H(+)(in) = 4 Fe(III)-[cytochrome c] + 2 H2O + 4 H(+)(out). Functionally, component of the cytochrome c oxidase, the last enzyme in the mitochondrial electron transport chain which drives oxidative phosphorylation. The respiratory chain contains 3 multisubunit complexes succinate dehydrogenase (complex II, CII), ubiquinol-cytochrome c oxidoreductase (cytochrome b-c1 complex, complex III, CIII) and cytochrome c oxidase (complex IV, CIV), that cooperate to transfer electrons derived from NADH and succinate to molecular oxygen, creating an electrochemical gradient over the inner membrane that drives transmembrane transport and the ATP synthase. Cytochrome c oxidase is the component of the respiratory chain that catalyzes the reduction of oxygen to water. Electrons originating from reduced cytochrome c in the intermembrane space (IMS) are transferred via the dinuclear copper A center (CU(A)) of subunit 2 and heme A of subunit 1 to the active site in subunit 1, a binuclear center (BNC) formed by heme A3 and copper B (CU(B)). The BNC reduces molecular oxygen to 2 water molecules using 4 electrons from cytochrome c in the IMS and 4 protons from the mitochondrial matrix. The protein is Cytochrome c oxidase subunit 2 (COX2) of Kluyveromyces lactis (strain ATCC 8585 / CBS 2359 / DSM 70799 / NBRC 1267 / NRRL Y-1140 / WM37) (Yeast).